The following is a 931-amino-acid chain: Kinesin heavy chain (931 aa).

Residues 6–329 (SIKVVARFRP…LRFGMRAKSI (324 aa)) enclose the Kinesin motor domain. ATP-binding positions include 87 to 94 (GQTGAGKS) and 237 to 244 (GSEKVGKT). Residues 342 to 864 (AELKSLLKKA…VKERLELAKA (523 aa)) are a coiled coil. Disordered regions lie at residues 388-465 (TTDA…EKQL) and 886-931 (AKPL…FTKS). The span at 402–419 (STRPSTPSLISDSRSETP) shows a compositional bias: polar residues. Basic and acidic residues predominate over residues 432-456 (LDKDEREEFLRRENELQDQISEKES). Positions 902–931 (PTIQNLQGQNEGNTSSGSSSKRASWFFTKS) are enriched in polar residues.

It belongs to the TRAFAC class myosin-kinesin ATPase superfamily. Kinesin family. Kinesin subfamily.

The protein resides in the cytoplasm. Its subcellular location is the cytoskeleton. Functionally, kinesin is a microtubule-associated force-producing protein that may play a role in organelle transport. Its motor activity is directed toward the microtubule's plus end. This chain is Kinesin heavy chain (KLP1), found in Gibberella moniliformis (Maize ear and stalk rot fungus).